The chain runs to 219 residues: Probable GTP-binding protein EngB (219 aa).

Positions 31-205 (VGVEIAFAGR…LSILNEWCHP (175 aa)) constitute an EngB-type G domain. Residues 39–46 (GRSNAGKS), 66–70 (GRTQL), 84–87 (DLPG), 151–154 (TKSD), and 184–186 (FSS) contribute to the GTP site. Residues Ser-46 and Thr-68 each contribute to the Mg(2+) site.

The protein belongs to the TRAFAC class TrmE-Era-EngA-EngB-Septin-like GTPase superfamily. EngB GTPase family. The cofactor is Mg(2+).

Necessary for normal cell division and for the maintenance of normal septation. The chain is Probable GTP-binding protein EngB from Shewanella denitrificans (strain OS217 / ATCC BAA-1090 / DSM 15013).